Here is an 85-residue protein sequence, read N- to C-terminus: UPF0297 protein LBUL_1485 (85 aa).

Belongs to the UPF0297 family.

In Lactobacillus delbrueckii subsp. bulgaricus (strain ATCC BAA-365 / Lb-18), this protein is UPF0297 protein LBUL_1485.